The sequence spans 813 residues: Lon protease (813 aa).

The Lon N-terminal domain maps to 30–225 (LPILPVRNIV…WLLQLMDKDI (196 aa)). 376-383 (GPPGVGKT) provides a ligand contact to ATP. The region spanning 612 to 793 (DDLAGIVTGL…DEVLAIALLK (182 aa)) is the Lon proteolytic domain. Catalysis depends on residues Ser699 and Lys742.

This sequence belongs to the peptidase S16 family. As to quaternary structure, homohexamer. Organized in a ring with a central cavity.

It localises to the cytoplasm. The enzyme catalyses Hydrolysis of proteins in presence of ATP.. Functionally, ATP-dependent serine protease that mediates the selective degradation of mutant and abnormal proteins as well as certain short-lived regulatory proteins. Required for cellular homeostasis and for survival from DNA damage and developmental changes induced by stress. Degrades polypeptides processively to yield small peptide fragments that are 5 to 10 amino acids long. Binds to DNA in a double-stranded, site-specific manner. The protein is Lon protease of Cytophaga hutchinsonii (strain ATCC 33406 / DSM 1761 / CIP 103989 / NBRC 15051 / NCIMB 9469 / D465).